A 180-amino-acid chain; its full sequence is Ribulose bisphosphate carboxylase small subunit, chloroplastic 5 (180 aa).

Residues 1 to 56 (MASSVMSSAAVATRGNGAQASMVAPFTGLKSTASFPVSRKQNLDITSIASNGGRVR) constitute a chloroplast transit peptide.

It belongs to the RuBisCO small chain family. Heterohexadecamer of 8 large and 8 small subunits.

The protein localises to the plastid. It is found in the chloroplast. RuBisCO catalyzes two reactions: the carboxylation of D-ribulose 1,5-bisphosphate, the primary event in carbon dioxide fixation, as well as the oxidative fragmentation of the pentose substrate. Both reactions occur simultaneously and in competition at the same active site. Although the small subunit is not catalytic it is essential for maximal activity. This Solanum tuberosum (Potato) protein is Ribulose bisphosphate carboxylase small subunit, chloroplastic 5.